The primary structure comprises 1101 residues: MEQPGAAASGAGGGSEEPGGGRSNKRSAGNRAANEEETKNKPKLNIQIKTLADDVRDRITSFRKSTVKKEKPLIQHPIDSQVAMSEFPAAQPLYDERSLNLSEKEVLDLFEKMMEDMNLNEEKKAPLRNKDFTTKREMVVQYISATAKSGGLKNSKHECTLSSQEYVHELRSGISDEKLLNCLESLRVSLTSNPVSWVNNFGHEGLGLLLDELEKLLDKKQQENIDKKNQYKLIQCLKAFMNNKFGLQRILGDERSLLLLARAIDPKQPNMMTEIVKILSAICIVGEENILDKLLGAITTAAERNNRERFSPIVEGLENQEALQLQVACMQFINALVTSPYELDFRIHLRNEFLRSGLKTMLPDLKEKENDELDIQLKVFDENKEDDLTELSHRLNDIRAEMDDMNEVYHLLYNMLKDTAAENYFLSILQHFLLIRNDYYIRPQYYKIIEECVSQIVLHCSGMDPDFKYRQRLDIDLTHLIDSCVNKAKVEESEQKAAEFSKKFDEEFTARQEAQAELQKRDEKIKELEAEIQQLRTQAQVLSSSSGIPGPPAAPPLPGVGPPPPPPAPPLPGGAPLPPPPPPLPGMMGIPPPPPPPLLFGGPPPPPPLGGVPPPPGISLNLPYGMKQKKMYKPEVSMKRINWSKIEPTELSENCFWLRVKEDKFENPDLFAKLALNFATQIKVQKNAEALEEKKTGPTKKKVKELRILDPKTAQNLSIFLGSYRMPYEDIRNVILEVNEDMLSEALIQNLVKHLPEQKILNELAELKNEYDDLCEPEQFGVVMSSVKMLQPRLSSILFKLTFEEHINNIKPSIIAVTLACEELKKSESFNRLLELVLLVGNYMNSGSRNAQSLGFKINFLCKIRDTKSADQKTTLLHFIADICEEKYRDILKFPEELEHVESASKVSAQILKSNLASMEQQIVHLERDIKKFPQAENQHDKFVEKMTSFTKTAREQYEKLSTMHNNMMKLYENLGEYFIFDSKTVSIEEFFGDLNNFRTLFLEAVRENNKRREMEEKTRRAKLAKEKAEQEKLERQKKKKQLIDINKEGDETGVMDNLLEALQSGAAFRDRRKRIPRNPDNRRVPLERSRSRHNGAISSK.

N-acetylmethionine is present on M1. The segment at 1-44 (MEQPGAAASGAGGGSEEPGGGRSNKRSAGNRAANEEETKNKPKL) is disordered. Residues 10-22 (GAGGGSEEPGGGR) are compositionally biased toward gly residues. The 367-residue stretch at 98 to 464 (SLNLSEKEVL…QIVLHCSGMD (367 aa)) folds into the GBD/FH3 domain. 2 coiled-coil regions span residues 366–418 (KEKE…MLKD) and 487–547 (KAKV…SSSG). Over residues 536 to 546 (RTQAQVLSSSS) the composition is skewed to polar residues. Disordered stretches follow at residues 536 to 594 (RTQA…PPPP), 1010 to 1048 (NKRREMEEKTRRAKLAKEKAEQEKLERQKKKKQLIDINK), and 1070 to 1101 (RDRRKRIPRNPDNRRVPLERSRSRHNGAISSK). Positions 549 to 594 (PGPPAAPPLPGVGPPPPPPAPPLPGGAPLPPPPPPLPGMMGIPPPP) are enriched in pro residues. The FH1 domain maps to 549–623 (PGPPAAPPLP…PPPGISLNLP (75 aa)). The FH2 domain maps to 628–1028 (QKKMYKPEVS…TRRAKLAKEK (401 aa)). Positions 903–1053 (SASKVSAQIL…IDINKEGDET (151 aa)) form a coiled coil. 2 stretches are compositionally biased toward basic and acidic residues: residues 1010 to 1035 (NKRREMEEKTRRAKLAKEKAEQEKLE) and 1078 to 1090 (RNPDNRRVPLERS). In terms of domain architecture, DAD spans 1051–1081 (DETGVMDNLLEALQSGAAFRDRRKRIPRNPD).

This sequence belongs to the formin homology family. Diaphanous subfamily. Isoform 3 interacts with RHOD in the GTP-bound form. As to expression, expressed in testis, ovary, small intestine, prostate, lung, liver, kidney and leukocytes.

It localises to the cytoplasm. Its subcellular location is the cytosol. The protein resides in the early endosome. Functionally, could be involved in oogenesis. Involved in the regulation of endosome dynamics. Implicated in a novel signal transduction pathway, in which isoform 3 and CSK are sequentially activated by RHOD to regulate the motility of early endosomes through interactions with the actin cytoskeleton. In Homo sapiens (Human), this protein is Protein diaphanous homolog 2 (DIAPH2).